A 298-amino-acid chain; its full sequence is tRNA dimethylallyltransferase (298 aa).

16-23 (GPTASGKS) contacts ATP. 18–23 (TASGKS) provides a ligand contact to substrate. 2 interaction with substrate tRNA regions span residues 41–44 (DSMQ) and 165–169 (QRIVR).

It belongs to the IPP transferase family. In terms of assembly, monomer. Requires Mg(2+) as cofactor.

The enzyme catalyses adenosine(37) in tRNA + dimethylallyl diphosphate = N(6)-dimethylallyladenosine(37) in tRNA + diphosphate. Catalyzes the transfer of a dimethylallyl group onto the adenine at position 37 in tRNAs that read codons beginning with uridine, leading to the formation of N6-(dimethylallyl)adenosine (i(6)A). The chain is tRNA dimethylallyltransferase from Rhizobium rhizogenes (strain K84 / ATCC BAA-868) (Agrobacterium radiobacter).